A 707-amino-acid chain; its full sequence is Nucleolin 2 (707 aa).

The tract at residues 1–446 (MGKSSKKSAV…TPASNQNQAT (446 aa)) is disordered. Composition is skewed to basic and acidic residues over residues 30–40 (RNAEDEIEKAV) and 47–60 (TVRE…EEAK). Acidic residues-rich tracts occupy residues 75–85 (SSEEDSSESEE), 108–120 (SSDD…SSDD), and 144–153 (DSSDESLSDD). Residues 158–170 (KPAAPLKKPVALA) are compositionally biased toward low complexity. 3 stretches are compositionally biased toward acidic residues: residues 219–232 (DSSD…SDED), 248–263 (SESS…DDEA), and 271–287 (ESSD…SDSD). Residues 300 to 311 (LTKDTKKGQSKD) are compositionally biased toward basic and acidic residues. Residues 312-326 (ESEDSSDESSEESGD) are compositionally biased toward acidic residues. Over residues 336-347 (STTSGTTKPSPK) the composition is skewed to low complexity. Residues 355–370 (SDDESDEDDSSDESSD) are compositionally biased toward acidic residues. Positions 376 to 394 (KQTQAKKQAPVAQESSSSD) are enriched in low complexity. Residues 395-406 (ESSEEDSDMESD) are compositionally biased toward acidic residues. Basic and acidic residues predominate over residues 407 to 417 (EPAKTPQKKET). The segment covering 420 to 429 (SVGSNKSATK) has biased composition (polar residues). The RRM 1 domain occupies 449–525 (KTLFVGNLPY…RPVRLDLARE (77 aa)). Disordered regions lie at residues 527–546 (GAYT…PAQS) and 629–707 (RPRP…GDDD). The RRM 2 domain maps to 549–630 (NTIFIKGFDT…YSLYVDEARP (82 aa)). The segment covering 657–681 (GRGDGSRGRGDRGRGRGFGRGDRGH) has biased composition (basic and acidic residues).

The protein localises to the nucleus. The protein resides in the nucleolus. Involved in pre-rRNA processing and ribosome assembly. This chain is Nucleolin 2, found in Oryza sativa subsp. japonica (Rice).